Here is a 123-residue protein sequence, read N- to C-terminus: Large ribosomal subunit protein uL22c (123 aa).

This sequence belongs to the universal ribosomal protein uL22 family. As to quaternary structure, part of the 50S ribosomal subunit.

It localises to the plastid. The protein resides in the chloroplast. In terms of biological role, this protein binds specifically to 23S rRNA. The globular domain of the protein is located near the polypeptide exit tunnel on the outside of the subunit, while an extended beta-hairpin is found that lines the wall of the exit tunnel in the center of the 70S ribosome. This chain is Large ribosomal subunit protein uL22c (rpl22), found in Illicium oligandrum (Star anise).